Consider the following 129-residue polypeptide: Endocuticle structural glycoprotein SgAbd-9 (129 aa).

Glutamine 1 is subject to Pyrrolidone carboxylic acid. A Chitin-binding type R&amp;R domain is found at 28–98 (DGSYTFSYES…VGNVVAPAIS (71 aa)). The O-linked (HexNAc...) threonine glycan is linked to threonine 120.

In terms of biological role, component of the abdominal endocuticle. The polypeptide is Endocuticle structural glycoprotein SgAbd-9 (Schistocerca gregaria (Desert locust)).